Reading from the N-terminus, the 227-residue chain is ATP-dependent dethiobiotin synthetase BioD (227 aa).

Position 13–18 (Asp-13–Tyr-18) interacts with ATP. Mg(2+) is bound at residue Thr-17. The active site involves Lys-38. Ser-42 is a substrate binding site. ATP is bound by residues Asp-55, Glu-116–Gly-119, and Asn-179–Asn-180. Residues Asp-55 and Glu-116 each contribute to the Mg(2+) site.

The protein belongs to the dethiobiotin synthetase family. Homodimer. It depends on Mg(2+) as a cofactor.

The protein resides in the cytoplasm. It catalyses the reaction (7R,8S)-7,8-diammoniononanoate + CO2 + ATP = (4R,5S)-dethiobiotin + ADP + phosphate + 3 H(+). It participates in cofactor biosynthesis; biotin biosynthesis; biotin from 7,8-diaminononanoate: step 1/2. Catalyzes a mechanistically unusual reaction, the ATP-dependent insertion of CO2 between the N7 and N8 nitrogen atoms of 7,8-diaminopelargonic acid (DAPA, also called 7,8-diammoniononanoate) to form a ureido ring. The protein is ATP-dependent dethiobiotin synthetase BioD of Clostridium botulinum (strain Loch Maree / Type A3).